We begin with the raw amino-acid sequence, 123 residues long: KQFTKCELSQVLKSMDGYKGVTLPEWICTIFHSSGYDTQTIVKNNGKTEYGLFQINNKMWCRDNQILPSRNICGISCNKFLDDDLTDDVMCAKKILDSEGIDYWLAHKPLCSEKLEQWLCEEL.

The C-type lysozyme domain maps to 1–123 (KQFTKCELSQ…KLEQWLCEEL (123 aa)). 4 disulfides stabilise this stretch: Cys-6/Cys-120, Cys-28/Cys-111, Cys-61/Cys-77, and Cys-73/Cys-91. Ca(2+)-binding residues include Lys-79, Asp-82, Asp-84, Asp-87, and Asp-88.

Belongs to the glycosyl hydrolase 22 family. Lactose synthase (LS) is a heterodimer of a catalytic component, beta1,4-galactosyltransferase (beta4Gal-T1) and a regulatory component, alpha-lactalbumin (LA). Mammary gland specific. Secreted in milk.

The protein localises to the secreted. Functionally, regulatory subunit of lactose synthase, changes the substrate specificity of galactosyltransferase in the mammary gland making glucose a good acceptor substrate for this enzyme. This enables LS to synthesize lactose, the major carbohydrate component of milk. In other tissues, galactosyltransferase transfers galactose onto the N-acetylglucosamine of the oligosaccharide chains in glycoproteins. In Equus asinus (Donkey), this protein is Alpha-lactalbumin (LALBA).